The following is a 309-amino-acid chain: Tagatose-6-phosphate kinase (309 aa).

The protein belongs to the carbohydrate kinase PfkB family. LacC subfamily.

It catalyses the reaction D-tagatofuranose 6-phosphate + ATP = D-tagatofuranose 1,6-bisphosphate + ADP + H(+). It functions in the pathway carbohydrate metabolism; D-tagatose 6-phosphate degradation; D-glyceraldehyde 3-phosphate and glycerone phosphate from D-tagatose 6-phosphate: step 1/2. The polypeptide is Tagatose-6-phosphate kinase (Streptococcus pyogenes serotype M12 (strain MGAS2096)).